A 130-amino-acid polypeptide reads, in one-letter code: MSSFEYPQDLRYLDTHEYVRLDGEIATIGITEFAVDQLGDVVFLELPDIGDLLTKGDTFGSIESVKAVENLNAPITGTVVERNEILVESPEAVADDPYGEGWFLKVRVNDPDEVNDALTADEYRAEVEGE.

The Lipoyl-binding domain occupies 25 to 107; sequence IATIGITEFA…YGEGWFLKVR (83 aa). Residue lysine 66 is modified to N6-lipoyllysine.

The protein belongs to the GcvH family. In terms of assembly, the glycine cleavage system is composed of four proteins: P, T, L and H. It depends on (R)-lipoate as a cofactor.

Functionally, the glycine cleavage system catalyzes the degradation of glycine. The H protein shuttles the methylamine group of glycine from the P protein to the T protein. The sequence is that of Glycine cleavage system H protein from Nostoc sp. (strain PCC 7120 / SAG 25.82 / UTEX 2576).